Reading from the N-terminus, the 71-residue chain is Small ribosomal subunit protein bS21 (71 aa).

The disordered stretch occupies residues 47 to 71 (RENATRAKRHAKRVARENARNTRLY). The segment covering 60–71 (VARENARNTRLY) has biased composition (basic and acidic residues).

Belongs to the bacterial ribosomal protein bS21 family.

In Actinobacillus succinogenes (strain ATCC 55618 / DSM 22257 / CCUG 43843 / 130Z), this protein is Small ribosomal subunit protein bS21.